Reading from the N-terminus, the 299-residue chain is MHCGPPDMVCETKIVATEDHEALPGAKKDALLVAAGAMWPPLPAAPGPAAAPPPAAGPQPHGGTGGAGPPEGRGVCIREFRAAEQEAARRIFYDGILERIPNTAFRGLRQHPRTQLLYALLAALCFAVTRSLLLTCLVPAGLLALRYYYSRKVILAYLECALHTDMADIEQYYMKPPGSCFWVAVLDGNVVGIVAARAHEEDNTVELLRMSVDSRFRGKSIAKALGRRVLEFAMLHNYSAVVLGTTAVKVAAHKLYESLGFRHMGASDHYVLPGMTLSLAERLFFQVRYHRYRLQLREE.

Residues 44 to 57 (AAPGPAAAPPPAAG) show a composition bias toward pro residues. The segment at 44–70 (AAPGPAAAPPPAAGPQPHGGTGGAGPP) is disordered. The span at 60 to 70 (PHGGTGGAGPP) shows a compositional bias: gly residues. The helical transmembrane segment at 118 to 138 (YALLAALCFAVTRSLLLTCLV) threads the bilayer. The N-acetyltransferase domain occupies 143 to 280 (LALRYYYSRK…VLPGMTLSLA (138 aa)).

Belongs to the NAT8 family. In terms of tissue distribution, expressed in brain, kidney, liver and spleen. In brain, present in neurons but not in astrocytes (at protein level). Expressed in brain, thymus and spleen.

It localises to the cytoplasm. Its subcellular location is the microsome membrane. The protein localises to the mitochondrion membrane. It is found in the endoplasmic reticulum membrane. It carries out the reaction L-aspartate + acetyl-CoA = N-acetyl-L-aspartate + CoA + H(+). Aminooxyacetic acid (AOAA) blocks its activity in both cytoplasm and mitochondria. Its function is as follows. Catalyzes the synthesis of N-acetylaspartate acid (NAA) from L-aspartate and acetyl-CoA. Promotes dopamine uptake by regulating TNF-alpha expression. Attenuates methamphetamine-induced inhibition of dopamine uptake. The chain is N-acetylaspartate synthetase (Nat8l) from Mus musculus (Mouse).